Here is a 337-residue protein sequence, read N- to C-terminus: Geranylgeranyl pyrophosphate synthase subD (337 aa).

3 residues coordinate isopentenyl diphosphate: Lys-53, Arg-56, and His-85. Mg(2+)-binding residues include Asp-92 and Asp-96. Arg-101 serves as a coordination point for dimethylallyl diphosphate. Arg-102 is a binding site for isopentenyl diphosphate. Residues Lys-179, Thr-180, and Gln-219 each contribute to the dimethylallyl diphosphate site. Asp-222 lines the Mg(2+) pocket. Dimethylallyl diphosphate is bound by residues Asn-226, Lys-236, and Lys-246.

It belongs to the FPP/GGPP synthase family. It depends on Mg(2+) as a cofactor.

The catalysed reaction is isopentenyl diphosphate + dimethylallyl diphosphate = (2E)-geranyl diphosphate + diphosphate. It catalyses the reaction isopentenyl diphosphate + (2E)-geranyl diphosphate = (2E,6E)-farnesyl diphosphate + diphosphate. The enzyme catalyses isopentenyl diphosphate + (2E,6E)-farnesyl diphosphate = (2E,6E,10E)-geranylgeranyl diphosphate + diphosphate. The protein operates within secondary metabolite biosynthesis; terpenoid biosynthesis. Geranylgeranyl pyrophosphate synthase; part of the gene cluster that mediates the biosynthesis of the immunosuppressants subglutinols, meroterpenoids consisting of an alpha-pyrone (4-hydroxy-5,6-dimethyl-2-pyrone) moiety attached to a decalin core fused to a five-membered cyclic ether carrying a prenylside chain. The first step of the pathway is the synthesis of the alpha-pyrone moiety by the polyketide synthase subA via condensation of one acetyl-CoA starter unit with 3 malonyl-CoA units and 2 methylations. The alpha-pyrone is then combined with geranylgeranyl pyrophosphate (GGPP) formed by the GGPP synthase subD through the action of the prenyltransferase subC to yield a linear alpha-pyrone diterpenoid. Subsequent steps in the subglutinol biosynthetic pathway involve the decalin core formation, which is thought to be initiated by the epoxidation of the C10-C11 olefin by the FAD-dependent oxidoreductase subE. The following cyclization cascade would be catalyzed by the terpene cyclase subB. Lastly, the FAD-dependent dehydrogenase subF probably catalyzes the five-membered cyclic ether formation to complete the formation of subglutinol A. Subsequent redox reactions appear to give rise to subglutinol C and D, however, it remains unclear which enzymes are responsible for these transformations. SubD may have secondary function in the conversion of the identified subglutinols to subglutinol analog 45, which seems to be the major product of the cluster. In Metarhizium robertsii (strain ARSEF 23 / ATCC MYA-3075) (Metarhizium anisopliae (strain ARSEF 23)), this protein is Geranylgeranyl pyrophosphate synthase subD.